The chain runs to 1439 residues: Histone-lysine N-methyltransferase NSD3 (1439 aa).

Positions 121-151 (PHEILEKPSPPQPPPPPSVPQTVIPKKTGSP) are disordered. Pro residues predominate over residues 128–139 (PSPPQPPPPPSV). Serine 150 carries the phosphoserine modification. Residues 154-157 (KLKI) carry the KIKL motif. Residues 181–247 (QASEHTKSKH…PREEPVLKEA (67 aa)) are disordered. The segment covering 187–201 (KSKHESRKEKRKKSN) has biased composition (basic residues). Residues 202-244 (RHESSRSEERRSHKIPKLEPEGQNRPNERVDTAPEKPREEPVL) show a composition bias toward basic and acidic residues. Residues lysine 218 and lysine 245 each participate in a glycyl lysine isopeptide (Lys-Gly) (interchain with G-Cter in SUMO2) cross-link. Residues 270–333 (VGDLVWSKVG…EKRVREYKGH (64 aa)) form the PWWP 1 domain. Disordered stretches follow at residues 344 to 367 (AKQA…ERAQ) and 401 to 466 (EASS…PPPV). 2 stretches are compositionally biased toward polar residues: residues 401 to 413 (EASS…VTSK) and 425 to 445 (VLNS…QSST). Lysine 413 participates in a covalent cross-link: Glycyl lysine isopeptide (Lys-Gly) (interchain with G-Cter in SUMO2). Serine 457 is modified (phosphoserine). Residues lysine 502 and lysine 532 each participate in a glycyl lysine isopeptide (Lys-Gly) (interchain with G-Cter in SUMO2) cross-link. A disordered region spans residues 540 to 695 (QDRLIISSPS…VDSSLSRRGV (156 aa)). Positions 546–568 (SSPSQRSEKPAQSASSPEATSGS) are enriched in polar residues. The span at 583 to 595 (TRSESEKSAEVVP) shows a compositional bias: basic and acidic residues. 3 positions are modified to phosphoserine: serine 585, serine 587, and serine 590. Lysine 628 participates in a covalent cross-link: Glycyl lysine isopeptide (Lys-Gly) (interchain with G-Cter in SUMO2). Residues 637-648 (STDVETASCTYR) show a composition bias toward polar residues. A Phosphoserine modification is found at serine 655. Residues 670-691 (DSPSATADADASDAQSVDSSLS) are compositionally biased toward low complexity. 3 consecutive PHD-type zinc fingers follow at residues 701–748 (DTVC…CETG), 749–805 (QHPC…CSME), and 862–955 (VGFC…CKAG). Lysine 790 is subject to N6-acetyllysine. In terms of domain architecture, PWWP 2 spans 960–1025 (YKQIVWVKLG…QGRVFPYVEG (66 aa)). A coiled-coil region spans residues 1036–1065 (INKTFKKALEEAAKRFQELKAQRESKEALE). An AWS domain is found at 1096-1146 (SEIPRCNCKPGDENPCGLESQCLNRMSQYECHPQVCPAGDRCQNQCFTKRL). The SET domain maps to 1148–1265 (PDAEVIKTER…AGMELTFNYN (118 aa)). Lysine 1154 participates in a covalent cross-link: Glycyl lysine isopeptide (Lys-Gly) (interchain with G-Cter in SUMO2). The 17-residue stretch at 1272–1288 (GRTVCHCGADNCSGFLG) folds into the Post-SET domain. A PHD-type 4; atypical zinc finger spans residues 1323–1370 (EDYCFQCGDGGELVMCDKKDCPKAYHLLCLNLTQPPHGKWECPWHRCD).

Belongs to the class V-like SAM-binding methyltransferase superfamily. Histone-lysine methyltransferase family. SET2 subfamily. Interacts with BRD4. Interacts (via KIKL motif) with BRD3 (via NET domain).

Its subcellular location is the nucleus. The protein localises to the chromosome. It carries out the reaction L-lysyl(4)-[histone H3] + 2 S-adenosyl-L-methionine = N(6),N(6)-dimethyl-L-lysyl(4)-[histone H3] + 2 S-adenosyl-L-homocysteine + 2 H(+). It catalyses the reaction L-lysyl(27)-[histone H3] + 2 S-adenosyl-L-methionine = N(6),N(6)-dimethyl-L-lysyl(27)-[histone H3] + 2 S-adenosyl-L-homocysteine + 2 H(+). In terms of biological role, histone methyltransferase. Preferentially dimethylates 'Lys-4' and 'Lys-27' of histone H3 forming H3K4me2 and H3K27me2. H3 'Lys-4' methylation represents a specific tag for epigenetic transcriptional activation, while 'Lys-27' is a mark for transcriptional repression. The protein is Histone-lysine N-methyltransferase NSD3 (Nsd3) of Mus musculus (Mouse).